A 321-amino-acid chain; its full sequence is 2,3,4,5-tetrahydropyridine-2,6-dicarboxylate N-succinyltransferase (321 aa).

Mg(2+) is bound by residues Asp-166 and Glu-183. Residue Glu-199 is the Acyl-anhydride intermediate of the active site. Succinyl-CoA-binding positions include Arg-201, Gly-216, Ser-219, Ala-242, 257–258, Gly-265, Lys-281, and 294–297; these read EA and RRNS.

It belongs to the type 2 tetrahydrodipicolinate N-succinyltransferase family. As to quaternary structure, homotrimer.

Its subcellular location is the cytoplasm. The enzyme catalyses (S)-2,3,4,5-tetrahydrodipicolinate + succinyl-CoA + H2O = (S)-2-succinylamino-6-oxoheptanedioate + CoA. It functions in the pathway amino-acid biosynthesis; L-lysine biosynthesis via DAP pathway; LL-2,6-diaminopimelate from (S)-tetrahydrodipicolinate (succinylase route): step 1/3. Functionally, catalyzes the conversion of the cyclic tetrahydrodipicolinate (THDP) into the acyclic N-succinyl-L-2-amino-6-oxopimelate using succinyl-CoA. This Micrococcus luteus (strain ATCC 4698 / DSM 20030 / JCM 1464 / CCM 169 / CCUG 5858 / IAM 1056 / NBRC 3333 / NCIMB 9278 / NCTC 2665 / VKM Ac-2230) (Micrococcus lysodeikticus) protein is 2,3,4,5-tetrahydropyridine-2,6-dicarboxylate N-succinyltransferase.